A 301-amino-acid chain; its full sequence is MADQPKPISPLKNLLAGGFGGVCLVFVGHPLDTVKVRLQTQPPSLPGQPPMYSGTFDCFRKTLFREGITGLYRGMAAPIIGVTPMFAVCFFGFGLGKKLQQKHPEDVLSYPQLFAAGMLSGVFTTGIMTPGERIKCLLQIQASSGESKYTGTLDCAKKLYQEFGIRGIYKGTVLTLMRDVPASGMYFMTYEWLKNIFTPEGKRVSELSAPRILVAGGIAGIFNWAVAIPPDVLKSRFQTAPPGKYPNGFRDVLRELIRDEGVTSLYKGFNAVMIRAFPANAACFLGFEVAMKFLNWATPNL.

The residue at position 2 (A2) is an N-acetylalanine. The Cytoplasmic portion of the chain corresponds to 2 to 12 (ADQPKPISPLK). Solcar repeat units lie at residues 8 to 99 (ISPL…GKKL), 108 to 196 (LSYP…LKNI), and 207 to 293 (LSAP…AMKF). The helical transmembrane segment at 13–31 (NLLAGGFGGVCLVFVGHPL) threads the bilayer. The Mitochondrial matrix segment spans residues 32–73 (DTVKVRLQTQPPSLPGQPPMYSGTFDCFRKTLFREGITGLYR). The chain crosses the membrane as a helical span at residues 74 to 93 (GMAAPIIGVTPMFAVCFFGF). Topologically, residues 94 to 112 (GLGKKLQQKHPEDVLSYPQ) are cytoplasmic. The helical transmembrane segment at 113-131 (LFAAGMLSGVFTTGIMTPG) threads the bilayer. Topologically, residues 132–170 (ERIKCLLQIQASSGESKYTGTLDCAKKLYQEFGIRGIYK) are mitochondrial matrix. K148 and K157 each carry N6-acetyllysine. At K170 the chain carries N6-acetyllysine; alternate. K170 is subject to N6-succinyllysine; alternate. Residues 171–190 (GTVLTLMRDVPASGMYFMTY) form a helical membrane-spanning segment. Topologically, residues 191-211 (EWLKNIFTPEGKRVSELSAPR) are cytoplasmic. Residues 212–230 (ILVAGGIAGIFNWAVAIPP) traverse the membrane as a helical segment. Topologically, residues 231 to 267 (DVLKSRFQTAPPGKYPNGFRDVLRELIRDEGVTSLYK) are mitochondrial matrix. A helical membrane pass occupies residues 268–287 (GFNAVMIRAFPANAACFLGF). The Cytoplasmic portion of the chain corresponds to 288–301 (EVAMKFLNWATPNL).

It belongs to the mitochondrial carrier (TC 2.A.29) family.

The protein resides in the mitochondrion inner membrane. It catalyses the reaction O-acetyl-(R)-carnitine(in) + (R)-carnitine(out) = O-acetyl-(R)-carnitine(out) + (R)-carnitine(in). It carries out the reaction an O-acyl-(R)-carnitine(in) + (R)-carnitine(out) = an O-acyl-(R)-carnitine(out) + (R)-carnitine(in). The catalysed reaction is O-propanoyl-(R)-carnitine(in) + (R)-carnitine(out) = O-propanoyl-(R)-carnitine(out) + (R)-carnitine(in). The enzyme catalyses O-hexadecanoyl-(R)-carnitine(in) + (R)-carnitine(out) = O-hexadecanoyl-(R)-carnitine(out) + (R)-carnitine(in). It catalyses the reaction O-octanoyl-(R)-carnitine(in) + (R)-carnitine(out) = O-octanoyl-(R)-carnitine(out) + (R)-carnitine(in). It carries out the reaction (R)-carnitine(in) = (R)-carnitine(out). Mediates the electroneutral exchange of acylcarnitines (O-acyl-(R)-carnitine or L-acylcarnitine) of different acyl chain lengths (ranging from O-acetyl-(R)-carnitine to long-chain O-acyl-(R)-carnitines) with free carnitine ((R)-carnitine or L-carnitine) across the mitochondrial inner membrane, via a ping-pong mechanism. Key player in the mitochondrial oxidation pathway, it translocates the fatty acids in the form of acylcarnitines into the mitochondrial matrix, where the carnitine palmitoyltransferase 2 (CPT-2) activates them to undergo fatty acid beta-oxidation. Catalyzes the unidirectional transport (uniport) of carnitine at lower rates than the antiport (exchange). This Homo sapiens (Human) protein is Mitochondrial carnitine/acylcarnitine carrier protein.